We begin with the raw amino-acid sequence, 148 residues long: uncharacterized protein (148 aa).

Disordered regions lie at residues 1–86 (MCPP…VQSP) and 122–148 (RAHR…TSPC). Over residues 38–57 (RPPKMQRRPRPPVAKRRRFP) the composition is skewed to basic residues. Residues 134–148 (QSRQRPSPDSQTSPC) show a composition bias toward polar residues.

The protein belongs to the Epstein-Barr virus BLLF2 family.

This is an uncharacterized protein from Homo sapiens (Human).